The sequence spans 204 residues: uncharacterized protein (204 aa).

A signal peptide spans M1–A17. The interval A17–K100 is disordered. C18 carries N-palmitoyl cysteine lipidation. A lipid anchor (S-diacylglycerol cysteine) is attached at C18. A compositionally biased stretch (basic and acidic residues) spans D23 to S70. The segment covering A71–K100 has biased composition (low complexity).

The protein localises to the cell membrane. This is an uncharacterized protein from Staphylococcus aureus (strain MSSA476).